Here is a 223-residue protein sequence, read N- to C-terminus: uncharacterized protein (223 aa).

Its subcellular location is the plastid. The protein localises to the chloroplast. This is an uncharacterized protein from Mesostigma viride (Green alga).